Consider the following 517-residue polypeptide: Maturase K (517 aa).

This sequence belongs to the intron maturase 2 family. MatK subfamily.

It localises to the plastid. The protein resides in the chloroplast. Usually encoded in the trnK tRNA gene intron. Probably assists in splicing its own and other chloroplast group II introns. The polypeptide is Maturase K (Juncus effusus (Soft rush)).